A 257-amino-acid polypeptide reads, in one-letter code: RING-H2 finger protein ATL5 (257 aa).

The chain crosses the membrane as a helical span at residues 28–48; the sequence is IMLASVIILFVAVILILCFHS. The RING-type; atypical zinc-finger motif lies at 113–155; it reads CSVCLSEFEEDDEGRVLPKCGHVFHVDCIDTWFRSRSSCPLCR. Residues 181-209 form a disordered region; that stretch reads EDTEAGSSSSSDESESSTPSSSSGSPVRF. Residues 185–206 show a composition bias toward low complexity; it reads AGSSSSSDESESSTPSSSSGSP.

Belongs to the RING-type zinc finger family. ATL subfamily.

Its subcellular location is the membrane. The catalysed reaction is S-ubiquitinyl-[E2 ubiquitin-conjugating enzyme]-L-cysteine + [acceptor protein]-L-lysine = [E2 ubiquitin-conjugating enzyme]-L-cysteine + N(6)-ubiquitinyl-[acceptor protein]-L-lysine.. The protein operates within protein modification; protein ubiquitination. In Arabidopsis thaliana (Mouse-ear cress), this protein is RING-H2 finger protein ATL5 (ATL5).